We begin with the raw amino-acid sequence, 1111 residues long: Isoleucine--tRNA ligase (1111 aa).

Residues 52–62 (PFANGLPHYGH) carry the 'HIGH' region motif. The 'KMSKS' region motif lies at 645-649 (KLSKR). Lys648 is a binding site for ATP.

This sequence belongs to the class-I aminoacyl-tRNA synthetase family. IleS type 2 subfamily. As to quaternary structure, monomer. Zn(2+) serves as cofactor.

Its subcellular location is the cytoplasm. It catalyses the reaction tRNA(Ile) + L-isoleucine + ATP = L-isoleucyl-tRNA(Ile) + AMP + diphosphate. Catalyzes the attachment of isoleucine to tRNA(Ile). As IleRS can inadvertently accommodate and process structurally similar amino acids such as valine, to avoid such errors it has two additional distinct tRNA(Ile)-dependent editing activities. One activity is designated as 'pretransfer' editing and involves the hydrolysis of activated Val-AMP. The other activity is designated 'posttransfer' editing and involves deacylation of mischarged Val-tRNA(Ile). This Wolbachia pipientis wMel protein is Isoleucine--tRNA ligase.